A 315-amino-acid chain; its full sequence is L-lactate dehydrogenase (315 aa).

Residues Val14, Asp35, and Tyr66 each coordinate NAD(+). Substrate contacts are provided by residues Gln83, Arg89, and 121 to 124 (NPVD). NAD(+) is bound by residues 119 to 121 (VAN) and Ser144. 149–152 (DTAR) serves as a coordination point for substrate. His176 functions as the Proton acceptor in the catalytic mechanism. The residue at position 221 (Tyr221) is a Phosphotyrosine. Thr230 contacts substrate.

It belongs to the LDH/MDH superfamily. LDH family. In terms of assembly, homotetramer.

Its subcellular location is the cytoplasm. The enzyme catalyses (S)-lactate + NAD(+) = pyruvate + NADH + H(+). It functions in the pathway fermentation; pyruvate fermentation to lactate; (S)-lactate from pyruvate: step 1/1. Its function is as follows. Catalyzes the conversion of lactate to pyruvate. The polypeptide is L-lactate dehydrogenase (Mesomycoplasma hyopneumoniae (strain 7448) (Mycoplasma hyopneumoniae)).